The chain runs to 316 residues: L-lactate dehydrogenase (316 aa).

Residues V15, D37, K42, Y68, and 82–83 (GL) each bind NAD(+). Residues Q85, R91, and 123-126 (NPVD) each bind substrate. NAD(+) is bound by residues 121–123 (ASN) and T146. 151–154 (DTSR) lines the substrate pocket. Residues R156 and H171 each contribute to the beta-D-fructose 1,6-bisphosphate site. The active-site Proton acceptor is the H178. Position 222 is a phosphotyrosine (Y222). A substrate-binding site is contributed by T231.

The protein belongs to the LDH/MDH superfamily. LDH family. Homotetramer.

Its subcellular location is the cytoplasm. The enzyme catalyses (S)-lactate + NAD(+) = pyruvate + NADH + H(+). Its pathway is fermentation; pyruvate fermentation to lactate; (S)-lactate from pyruvate: step 1/1. With respect to regulation, allosterically activated by fructose 1,6-bisphosphate (FBP). In terms of biological role, catalyzes the conversion of lactate to pyruvate. This is L-lactate dehydrogenase from Borrelia hermsii (strain HS1 / DAH).